We begin with the raw amino-acid sequence, 264 residues long: MTGTPNSRRIDVITVFPEMVEQVARFGVVGRAAERGLIELSAWNPRDYAEDRHATVDDRPYGGGPGMVMKVAPLHRAIQAARAADPRPARVIHLSPQGARLDQDRVARLAACERVIYLCGRYEGIDERLLEAEVDEELSIGDYVLSGGELAAMVAIDAATRLVPGALGHEDSAAEDSFATGLLDHPHYTRPEVYERRGVPEVLRSGDHGAVDTWRLKQALGRTWLRRPDLLAGRELDERQRRLLDEFIAEHRAEARAGNDHDET.

Residues Gly-120 and 140–145 contribute to the S-adenosyl-L-methionine site; that span reads IGDYVL.

It belongs to the RNA methyltransferase TrmD family. As to quaternary structure, homodimer.

It is found in the cytoplasm. The catalysed reaction is guanosine(37) in tRNA + S-adenosyl-L-methionine = N(1)-methylguanosine(37) in tRNA + S-adenosyl-L-homocysteine + H(+). Functionally, specifically methylates guanosine-37 in various tRNAs. The protein is tRNA (guanine-N(1)-)-methyltransferase of Halorhodospira halophila (strain DSM 244 / SL1) (Ectothiorhodospira halophila (strain DSM 244 / SL1)).